The primary structure comprises 224 residues: 7-cyano-7-deazaguanine synthase (224 aa).

Leu12 to Thr22 contributes to the ATP binding site. Cys193, Cys201, Cys204, and Cys207 together coordinate Zn(2+).

The protein belongs to the QueC family. It depends on Zn(2+) as a cofactor.

It catalyses the reaction 7-carboxy-7-deazaguanine + NH4(+) + ATP = 7-cyano-7-deazaguanine + ADP + phosphate + H2O + H(+). It participates in purine metabolism; 7-cyano-7-deazaguanine biosynthesis. Functionally, catalyzes the ATP-dependent conversion of 7-carboxy-7-deazaguanine (CDG) to 7-cyano-7-deazaguanine (preQ(0)). This is 7-cyano-7-deazaguanine synthase from Prochlorococcus marinus (strain MIT 9215).